We begin with the raw amino-acid sequence, 2345 residues long: Nonribisomal peptide synthetase malG (2345 aa).

Positions 226 to 620 (FSEQAKKNPT…VGRMGTVVKV (395 aa)) are adenylation 1. The Carrier 1 domain maps to 766-839 (TENETLLRLL…EAAGTMISAG (74 aa)). Position 800 is an O-(pantetheine 4'-phosphoryl)serine (Ser-800). A condensation 1 region spans residues 877 to 1292 (EEIYPSTPLQ…LLCPSDKSKL (416 aa)). The adenylation 2 stretch occupies residues 1317–1707 (VRSERTAVSA…GRKNREVKLR (391 aa)). A Carrier 2 domain is found at 1843–1926 (QPHESTALFV…DIARLIEGVK (84 aa)). Ser-1885 is modified (O-(pantetheine 4'-phosphoryl)serine). The tract at residues 1969–2256 (GMSVFLTGGT…PRQLNALQSE (288 aa)) is reductase (R) domain.

The protein belongs to the NRP synthetase family.

It carries out the reaction L-proline + L-tryptophan + 2 ATP + NADPH = (S)-3-(indol-3-ylmethyl)-6,7,8,8a-tetrahydropyrrolo[1,2-a]pyrazin-1-one + 2 AMP + 2 diphosphate + NADP(+) + H2O + H(+). Nonribisomal peptide synthetase; part of the gene cluster that mediates the biosynthesis of malbrancheamide, a dichlorinated fungal indole alkaloid that belongs to a family of natural products containing a characteristic bicyclo[2.2.2]diazaoctane core. The first step of malbrancheamide biosynthesis involves coupling of L-proline and L-tryptophan by malG, a bimodular NRPS, to produce L-Pro-L-Trp aldehyde through reductive offloading. This compound undergoes spontaneous cyclization and dehydration to give a dienamine which is reverse prenylated at C-2 by malE. The other prenyltransferase present in the cluster, malB, displays modest activity, suggesting that may be a redundant gene in the pathway. Subsequently, a [4+2] Diels-Alder cyclo-addition catalyzed by the bifunctional enzyme malC forms the characteristic bicyclo[2.2.2]diazaoctane ring of premalbrancheamid. Finally, the flavin-dependent halogenase malA catalyzes the iterative dichlorination of the indole ring of premalbrancheamide to yield C-9 monochlorinated malbrancheamide B, C-8 monochlorinated isomalbrancheamide B, and dichlorinated malbrancheamide. MalA is also able to brominate premalbrancheamide at C-9 to yield malbrancheamide C, and, to a lesser extend, at C-8 to yield isomalbrancheamide C. Finally, malA can brominate C-9 monochlorinated malbrancheamide B at C-8 to yield malbrancheamide D, or C-8 monochlorinated isomalbrancheamide B at C-9 to produce isomalbrancheamide D. The polypeptide is Nonribisomal peptide synthetase malG (Malbranchea aurantiaca).